Here is a 164-residue protein sequence, read N- to C-terminus: SsrA-binding protein (164 aa).

The interval 141-164 (KLHDKRQDEKQKSIKKEINSALKR) is disordered. The span at 145–158 (KRQDEKQKSIKKEI) shows a compositional bias: basic and acidic residues.

The protein belongs to the SmpB family.

The protein localises to the cytoplasm. Required for rescue of stalled ribosomes mediated by trans-translation. Binds to transfer-messenger RNA (tmRNA), required for stable association of tmRNA with ribosomes. tmRNA and SmpB together mimic tRNA shape, replacing the anticodon stem-loop with SmpB. tmRNA is encoded by the ssrA gene; the 2 termini fold to resemble tRNA(Ala) and it encodes a 'tag peptide', a short internal open reading frame. During trans-translation Ala-aminoacylated tmRNA acts like a tRNA, entering the A-site of stalled ribosomes, displacing the stalled mRNA. The ribosome then switches to translate the ORF on the tmRNA; the nascent peptide is terminated with the 'tag peptide' encoded by the tmRNA and targeted for degradation. The ribosome is freed to recommence translation, which seems to be the essential function of trans-translation. The protein is SsrA-binding protein of Prochlorococcus marinus (strain MIT 9301).